The sequence spans 901 residues: Protein translocase subunit SecA (901 aa).

Residues glutamine 87, 105 to 109 (GEGKT), and aspartate 512 contribute to the ATP site. A disordered region spans residues 852-901 (AQMQQLSHQDDDSAAAAALAAQTGDRKVGRNDPCPCGSGKKYKQCHGRLS). Residues cysteine 885, cysteine 887, cysteine 896, and histidine 897 each coordinate Zn(2+). A compositionally biased stretch (basic residues) spans 891–901 (KKYKQCHGRLS).

Belongs to the SecA family. As to quaternary structure, monomer and homodimer. Part of the essential Sec protein translocation apparatus which comprises SecA, SecYEG and auxiliary proteins SecDF-YajC and YidC. Requires Zn(2+) as cofactor.

Its subcellular location is the cell inner membrane. The protein resides in the cytoplasm. It catalyses the reaction ATP + H2O + cellular proteinSide 1 = ADP + phosphate + cellular proteinSide 2.. Part of the Sec protein translocase complex. Interacts with the SecYEG preprotein conducting channel. Has a central role in coupling the hydrolysis of ATP to the transfer of proteins into and across the cell membrane, serving both as a receptor for the preprotein-SecB complex and as an ATP-driven molecular motor driving the stepwise translocation of polypeptide chains across the membrane. The polypeptide is Protein translocase subunit SecA (Citrobacter koseri (strain ATCC BAA-895 / CDC 4225-83 / SGSC4696)).